A 67-amino-acid chain; its full sequence is Large ribosomal subunit protein uL29 (67 aa).

Belongs to the universal ribosomal protein uL29 family.

The sequence is that of Large ribosomal subunit protein uL29 from Ehrlichia canis (strain Jake).